A 140-amino-acid chain; its full sequence is ATP synthase epsilon chain (140 aa).

It belongs to the ATPase epsilon chain family. F-type ATPases have 2 components, CF(1) - the catalytic core - and CF(0) - the membrane proton channel. CF(1) has five subunits: alpha(3), beta(3), gamma(1), delta(1), epsilon(1). CF(0) has three main subunits: a, b and c.

The protein localises to the cell inner membrane. Produces ATP from ADP in the presence of a proton gradient across the membrane. This chain is ATP synthase epsilon chain, found in Chromobacterium violaceum (strain ATCC 12472 / DSM 30191 / JCM 1249 / CCUG 213 / NBRC 12614 / NCIMB 9131 / NCTC 9757 / MK).